Consider the following 133-residue polypeptide: UPF0344 protein SH1980 (133 aa).

Transmembrane regions (helical) follow at residues methionine 1–leucine 21, valine 42–alanine 62, methionine 71–isoleucine 91, and leucine 103–tryptophan 123.

Belongs to the UPF0344 family.

The protein localises to the cell membrane. The protein is UPF0344 protein SH1980 of Staphylococcus haemolyticus (strain JCSC1435).